Here is a 728-residue protein sequence, read N- to C-terminus: 1,4-alpha-glucan branching enzyme GlgB (728 aa).

D405 (nucleophile) is an active-site residue. E458 acts as the Proton donor in catalysis.

It belongs to the glycosyl hydrolase 13 family. GlgB subfamily. In terms of assembly, monomer.

The catalysed reaction is Transfers a segment of a (1-&gt;4)-alpha-D-glucan chain to a primary hydroxy group in a similar glucan chain.. The protein operates within glycan biosynthesis; glycogen biosynthesis. Its function is as follows. Catalyzes the formation of the alpha-1,6-glucosidic linkages in glycogen by scission of a 1,4-alpha-linked oligosaccharide from growing alpha-1,4-glucan chains and the subsequent attachment of the oligosaccharide to the alpha-1,6 position. This chain is 1,4-alpha-glucan branching enzyme GlgB, found in Serratia proteamaculans (strain 568).